A 333-amino-acid chain; its full sequence is Antimicrobial peptides (333 aa).

Positions 1–23 (MVQKGVVFGVLLILFICSTLTSA) are cleaved as a signal peptide. Residues 23-52 (ADSKPNPTKEEEPAKKPDEVSVKSGGPEVS) are disordered. The propeptide at 24–54 (DSKPNPTKEEEPAKKPDEVSVKSGGPEVSED) is acidic peptide 1. The span at 29–43 (PTKEEEPAKKPDEVS) shows a compositional bias: basic and acidic residues. Gln-55 carries the pyrrolidone carboxylic acid modification. 2 cysteine pairs are disulfide-bonded: Cys-60–Cys-70 and Cys-61–Cys-74. A propeptide spans 75–102 (ANAEEAAAAIPEASEELAQEEAPVYSED) (acidic peptide 2). Position 103 is a pyrrolidone carboxylic acid (Gln-103). Disulfide bonds link Cys-108–Cys-118 and Cys-109–Cys-122. Residues 123–148 (QNAEEAAAAIPEATEKAQEAPVYSED) constitute a propeptide, acidic peptide 3. Gln-149 carries the pyrrolidone carboxylic acid modification. Intrachain disulfides connect Cys-154-Cys-164 and Cys-155-Cys-168. The propeptide at 169–196 (QNAEEAAAAVAIPEASEKAQEGPVYSED) is acidic peptide 4. At Gln-197 the chain carries Pyrrolidone carboxylic acid. 2 cysteine pairs are disulfide-bonded: Cys-202-Cys-212 and Cys-203-Cys-216. Positions 217-232 (SNAADEVATPEDVEPG) are cleaved as a propeptide — acidic peptide 5. Pyrrolidone carboxylic acid is present on Gln-233. Cystine bridges form between Cys-238-Cys-248 and Cys-239-Cys-252. A propeptide spans 253–278 (HNAAEEATLKAFEEEAAREQPVYSED) (acidic peptide 6). At Gln-279 the chain carries Pyrrolidone carboxylic acid. Intrachain disulfides connect Cys-284/Cys-294 and Cys-285/Cys-298. Residues 299–333 (QSAEEAAAFQAGEVTASLMLIMFKACPCMGPVPSV) constitute a propeptide, acidic peptide 7.

Post-translationally, the N-terminal of all peptides are blocked. The 4 cysteine residues of all peptides are involved in intrachain disulfide bonds.

Its subcellular location is the secreted. Functionally, plays a role in the defense of the germinating seed against microorganisms, by inhibiting the growth of a range of filamentous fungi and bacteria, especially Gram-positive bacteria. Not cytotoxic for cultured human cells and are the smallest known plant-derived antimicrobial peptides. Peptide IB-AMP4 has a higher antifungal activity than IB-AMP1. This Impatiens balsamina (Balsam) protein is Antimicrobial peptides (AMP).